Here is a 413-residue protein sequence, read N- to C-terminus: Probable protein S-acyltransferase 3 (413 aa).

2 helical membrane passes run 65-85 (LTSF…LVWI) and 96-116 (VLAS…LTSA). Residues 171–221 (KFCDTCLLYRPPRASHCSICNNCVQRFDHHCPWVGQCIARRNYPFFICFIS) form the DHHC domain. The active-site S-palmitoyl cysteine intermediate is Cys-201. The next 2 helical transmembrane spans lie at 216 to 236 (FICF…FSWI) and 255 to 275 (SVIL…LTIF). A disordered region spans residues 364–413 (RDSPRKLPLPTRNLDDIKDISDNYDRSTTTREDASDRDPSFFSSQLDLPK). The span at 376–402 (NLDDIKDISDNYDRSTTTREDASDRDP) shows a compositional bias: basic and acidic residues. Over residues 404–413 (FFSSQLDLPK) the composition is skewed to polar residues.

Belongs to the DHHC palmitoyltransferase family. In terms of tissue distribution, expressed in flowers and pollen.

The protein resides in the endoplasmic reticulum membrane. Its subcellular location is the cytoplasmic vesicle membrane. It carries out the reaction L-cysteinyl-[protein] + hexadecanoyl-CoA = S-hexadecanoyl-L-cysteinyl-[protein] + CoA. In terms of biological role, palmitoyl acyltransferase. This is Probable protein S-acyltransferase 3 (PAT03) from Arabidopsis thaliana (Mouse-ear cress).